Consider the following 882-residue polypeptide: Translation initiation factor IF-2 (882 aa).

Disordered regions lie at residues lysine 67–arginine 202 and glutamate 223–lysine 278. Composition is skewed to basic and acidic residues over residues valine 95–alanine 152 and glutamate 161–arginine 202. Positions glycine 251–arginine 264 are enriched in basic residues. Positions glycine 265–glutamate 274 are enriched in basic and acidic residues. Residues proline 382–lysine 551 form the tr-type G domain. The segment at glycine 391–threonine 398 is G1. Residue glycine 391–threonine 398 participates in GTP binding. The segment at glycine 416–histidine 420 is G2. Residues aspartate 437–glycine 440 are G3. GTP is bound by residues aspartate 437–histidine 441 and asparagine 491–aspartate 494. A G4 region spans residues asparagine 491–aspartate 494. Positions serine 527–lysine 529 are G5.

This sequence belongs to the TRAFAC class translation factor GTPase superfamily. Classic translation factor GTPase family. IF-2 subfamily.

It is found in the cytoplasm. Its function is as follows. One of the essential components for the initiation of protein synthesis. Protects formylmethionyl-tRNA from spontaneous hydrolysis and promotes its binding to the 30S ribosomal subunits. Also involved in the hydrolysis of GTP during the formation of the 70S ribosomal complex. The sequence is that of Translation initiation factor IF-2 from Shewanella amazonensis (strain ATCC BAA-1098 / SB2B).